Consider the following 246-residue polypeptide: MSILITRPSPAGEALVSRLRALGQVAWSFPLIEFVAGRELPTLADRLATLTENDLVFALSQHAVAFAHAQLQRDGRNWPVAPRYFAIGRTTALALHTVSGFDIRYPLDREISEALLQLPELQNIAGKRALILRGNGGRELLGETLTARGAEVSFCECYQRCAKHYDGAEEAMRWHTRGVTTLVVTSGEMLQRLWSLTPQWYREHWLLRCRLLVVSERLAHLARELGWQDIKVADNADNDALLRALQ.

Belongs to the uroporphyrinogen-III synthase family. In terms of assembly, monomer.

It carries out the reaction hydroxymethylbilane = uroporphyrinogen III + H2O. Its pathway is porphyrin-containing compound metabolism; protoporphyrin-IX biosynthesis; coproporphyrinogen-III from 5-aminolevulinate: step 3/4. Functionally, catalyzes cyclization of the linear tetrapyrrole, hydroxymethylbilane, to the macrocyclic uroporphyrinogen III. In Salmonella typhimurium (strain LT2 / SGSC1412 / ATCC 700720), this protein is Uroporphyrinogen-III synthase (hemD).